We begin with the raw amino-acid sequence, 109 residues long: Matrix protein 2 (109 aa).

The Virion surface segment spans residues 1–4 (MLEP). Residues 5–27 (FQILSICSFILSALHFMAWTIGH) traverse the membrane as a helical; Signal-anchor for type III membrane protein segment. Residues 28-109 (LNQIKRGVNL…ETVLEVEELH (82 aa)) are Intravirion-facing.

As to quaternary structure, homotetramer. Post-translationally, phosphorylated by host.

It localises to the virion membrane. The protein localises to the host cell membrane. Functionally, forms presumably a highly low-pH gated proton-selective channel. Trp-23 may function as a minimalistic gate that opens and closes the pore. When the environmental pH is lower than a threshold, the BM2 channel would be activated and selectively transport protons across the membrane from the extracellular side to the cytoplasmic side. Crucial for the uncoating process. When the virion is internalized into the endosome, the channel acidifies the virion's interior, promoting the dissociation of matrix protein 1 (M1) from the ribonucleoprotein (RNP) thus allowing the transport of the RNP from the virion into the cell's nucleus. Also plays a role in viral protein secretory pathway. Elevates the intravesicular pH of normally acidic compartments, such as trans-Golgi network, preventing newly formed hemagglutinin from premature switching to the fusion-active conformation. Plays a crucial role in virion assembly. Expressed in the late phase of the infection. This chain is Matrix protein 2 (M), found in Homo sapiens (Human).